The following is a 189-amino-acid chain: Ribosome maturation factor RimM (189 aa).

In terms of domain architecture, PRC barrel spans E95 to L177.

Belongs to the RimM family. Binds ribosomal protein uS19.

It is found in the cytoplasm. An accessory protein needed during the final step in the assembly of 30S ribosomal subunit, possibly for assembly of the head region. Essential for efficient processing of 16S rRNA. May be needed both before and after RbfA during the maturation of 16S rRNA. It has affinity for free ribosomal 30S subunits but not for 70S ribosomes. The polypeptide is Ribosome maturation factor RimM (Rhizobium leguminosarum bv. trifolii (strain WSM2304)).